A 236-amino-acid polypeptide reads, in one-letter code: MAFRALTTKAAARPLLALGPRSVAMGARYMSTPAPQDPKSKAAAILDSLPGSTALSKTGILATSAAAAIYAISNELYVLNAETILLCTFTGFSFLIAKLVAPAYKEYADKRMQHVSGILNSSRNKHVAAVKERIESVSELKNVTETTKVLFEVSKETLELEAKAFELKQKVDLATEAKAVLDSWVRYEASVRQLQQKQIAESVIGKVQAELANPKFQDKVLQQSVADVEKLFASLK.

A mitochondrion-targeting transit peptide spans 1-29 (MAFRALTTKAAARPLLALGPRSVAMGARY).

Belongs to the eukaryotic ATPase subunit B family. In terms of assembly, F-type ATPases have 2 components, CF(1) - the catalytic core - and CF(0) - the membrane proton channel. In yeast, the dimeric form of ATP synthase consists of 17 polypeptides: alpha, beta, gamma, delta, epsilon, 4 (B), 5 (OSCP), 6 (A), 8, 9 (C), d, E (Tim11), f, g, h, i/j and k.

Its subcellular location is the mitochondrion. The protein resides in the mitochondrion inner membrane. Its function is as follows. Mitochondrial membrane ATP synthase (F(1)F(0) ATP synthase or Complex V) produces ATP from ADP in the presence of a proton gradient across the membrane which is generated by electron transport complexes of the respiratory chain. F-type ATPases consist of two structural domains, F(1) - containing the extramembraneous catalytic core, and F(0) - containing the membrane proton channel, linked together by a central stalk and a peripheral stalk. During catalysis, ATP synthesis in the catalytic domain of F(1) is coupled via a rotary mechanism of the central stalk subunits to proton translocation. Part of the complex F(0) domain and the peripheric stalk, which acts as a stator to hold the catalytic alpha(3)beta(3) subcomplex and subunit a/ATP6 static relative to the rotary elements. This is ATP synthase subunit 4, mitochondrial (ATP4) from Eremothecium gossypii (strain ATCC 10895 / CBS 109.51 / FGSC 9923 / NRRL Y-1056) (Yeast).